The following is a 492-amino-acid chain: 5-taurinomethyluridine-[tRNA] synthase subunit GTPB3, mitochondrial (492 aa).

A mitochondrion-targeting transit peptide spans 1–20 (MWRGLSALVTQAAWAPLRLC). Residues arginine 52, glutamate 112, and lysine 152 each coordinate 5,10-methylenetetrahydrofolate. Residues 249–416 (GANVVVTGPP…LLQALKTELA (168 aa)) enclose the TrmE-type G domain. Residues 256-263 (GPPNAGKS), 282-286 (GTTRD), 303-306 (DTAG), and 374-377 (NKSD) contribute to the GTP site. Asparagine 259 provides a ligand contact to K(+). Residues serine 263 and threonine 284 each contribute to the Mg(2+) site. Position 492 (lysine 492) interacts with 5,10-methylenetetrahydrofolate.

This sequence belongs to the TRAFAC class TrmE-Era-EngA-EngB-Septin-like GTPase superfamily. TrmE GTPase family. As to quaternary structure, homodimer; forms a dimer in the presence of potassium. Interacts with MTO1; forms the GTPBP3-MTO1 complex composed of homodimers of GTPBP3 and MTO1. K(+) serves as cofactor. Ubiquitously expressed. Highly expressed in tissues with high metabolic rates including heart, liver and brain. Weakly expressed in skeletal muscle.

It is found in the mitochondrion. It carries out the reaction GTP + H2O = GDP + phosphate + H(+). Its function is as follows. GTPase component of the GTPBP3-MTO1 complex that catalyzes the 5-taurinomethyluridine (taum(5)U) modification at the 34th wobble position (U34) of mitochondrial tRNAs (mt-tRNAs), which plays a role in mt-tRNA decoding and mitochondrial translation. Taum(5)U formation on mammalian mt-tRNA requires the presence of both GTPBP3-mediated GTPase activity and MTO1 catalytic activity. This Mus musculus (Mouse) protein is 5-taurinomethyluridine-[tRNA] synthase subunit GTPB3, mitochondrial.